The chain runs to 160 residues: Cytochrome b6-f complex subunit 4 (160 aa).

3 consecutive transmembrane segments (helical) span residues 36-56 (LLYI…GLAV), 95-115 (LLGV…PFLE), and 131-151 (TVFL…ALPI).

It belongs to the cytochrome b family. PetD subfamily. As to quaternary structure, the 4 large subunits of the cytochrome b6-f complex are cytochrome b6, subunit IV (17 kDa polypeptide, petD), cytochrome f and the Rieske protein, while the 4 small subunits are petG, petL, petM and petN. The complex functions as a dimer.

It localises to the plastid. Its subcellular location is the chloroplast thylakoid membrane. Functionally, component of the cytochrome b6-f complex, which mediates electron transfer between photosystem II (PSII) and photosystem I (PSI), cyclic electron flow around PSI, and state transitions. This Psilotum nudum (Whisk fern) protein is Cytochrome b6-f complex subunit 4.